The sequence spans 240 residues: Biosynthetic peptidoglycan transglycosylase (240 aa).

Residues 15 to 35 (WMFYLGAVVAIAWLATQAFYF) form a helical membrane-spanning segment.

The protein belongs to the glycosyltransferase 51 family.

It is found in the cell inner membrane. The enzyme catalyses [GlcNAc-(1-&gt;4)-Mur2Ac(oyl-L-Ala-gamma-D-Glu-L-Lys-D-Ala-D-Ala)](n)-di-trans,octa-cis-undecaprenyl diphosphate + beta-D-GlcNAc-(1-&gt;4)-Mur2Ac(oyl-L-Ala-gamma-D-Glu-L-Lys-D-Ala-D-Ala)-di-trans,octa-cis-undecaprenyl diphosphate = [GlcNAc-(1-&gt;4)-Mur2Ac(oyl-L-Ala-gamma-D-Glu-L-Lys-D-Ala-D-Ala)](n+1)-di-trans,octa-cis-undecaprenyl diphosphate + di-trans,octa-cis-undecaprenyl diphosphate + H(+). Its pathway is cell wall biogenesis; peptidoglycan biosynthesis. In terms of biological role, peptidoglycan polymerase that catalyzes glycan chain elongation from lipid-linked precursors. This Paraburkholderia xenovorans (strain LB400) protein is Biosynthetic peptidoglycan transglycosylase.